A 504-amino-acid chain; its full sequence is ATP synthase subunit alpha (504 aa).

171–178 (GDRQTGKT) is a binding site for ATP.

It belongs to the ATPase alpha/beta chains family. As to quaternary structure, F-type ATPases have 2 components, CF(1) - the catalytic core - and CF(0) - the membrane proton channel. CF(1) has five subunits: alpha(3), beta(3), gamma(1), delta(1), epsilon(1). CF(0) has three main subunits: a(1), b(2) and c(9-12). The alpha and beta chains form an alternating ring which encloses part of the gamma chain. CF(1) is attached to CF(0) by a central stalk formed by the gamma and epsilon chains, while a peripheral stalk is formed by the delta and b chains.

The protein localises to the cell inner membrane. The enzyme catalyses ATP + H2O + 4 H(+)(in) = ADP + phosphate + 5 H(+)(out). Produces ATP from ADP in the presence of a proton gradient across the membrane. The alpha chain is a regulatory subunit. The protein is ATP synthase subunit alpha of Helicobacter hepaticus (strain ATCC 51449 / 3B1).